Consider the following 96-residue polypeptide: Protein RnfH (96 aa).

It belongs to the UPF0125 (RnfH) family.

In Escherichia coli O127:H6 (strain E2348/69 / EPEC), this protein is Protein RnfH.